Consider the following 745-residue polypeptide: Polyribonucleotide nucleotidyltransferase (745 aa).

2 residues coordinate Mg(2+): Asp-487 and Asp-493. One can recognise a KH domain in the interval 554–613 (PSSTTVKIDKDKIKDIIGPGGKIIKEICETSNAKIDISDDGTVSIYASDRDKIKIALDKI). In terms of domain architecture, S1 motif spans 623–691 (GEIFNGTVMK…NKGKAKLTIK (69 aa)). The interval 693-732 (AYKDHSSNNTKQKNNVKDDSESEQRRDTSKKRTWNEDNNT) is disordered. Residues 707–719 (NVKDDSESEQRRD) show a composition bias toward basic and acidic residues.

It belongs to the polyribonucleotide nucleotidyltransferase family. Mg(2+) is required as a cofactor.

It localises to the cytoplasm. It carries out the reaction RNA(n+1) + phosphate = RNA(n) + a ribonucleoside 5'-diphosphate. Functionally, involved in mRNA degradation. Catalyzes the phosphorolysis of single-stranded polyribonucleotides processively in the 3'- to 5'-direction. The polypeptide is Polyribonucleotide nucleotidyltransferase (Rickettsia prowazekii (strain Madrid E)).